A 77-amino-acid chain; its full sequence is Large ribosomal subunit protein bL28 (77 aa).

Belongs to the bacterial ribosomal protein bL28 family.

The protein is Large ribosomal subunit protein bL28 of Cupriavidus necator (strain ATCC 17699 / DSM 428 / KCTC 22496 / NCIMB 10442 / H16 / Stanier 337) (Ralstonia eutropha).